The primary structure comprises 679 residues: Glycine--tRNA ligase beta subunit (679 aa).

Belongs to the class-II aminoacyl-tRNA synthetase family. Tetramer of two alpha and two beta subunits.

It is found in the cytoplasm. It catalyses the reaction tRNA(Gly) + glycine + ATP = glycyl-tRNA(Gly) + AMP + diphosphate. This chain is Glycine--tRNA ligase beta subunit, found in Streptococcus pyogenes serotype M12 (strain MGAS9429).